We begin with the raw amino-acid sequence, 543 residues long: Secreted effector protein SptP (543 aa).

The segment at 35 to 139 (TDKAYVAPEK…FINLIKNKDN (105 aa)) is chaperone-binding. Positions 162-293 (DVGAESKQPL…TAELEKIKAG (132 aa)) constitute a Bacterial Rho-GAP domain. Residues 315–543 (IPINQQTQVK…QAQLLMTTAS (229 aa)) form the Tyrosine-protein phosphatase domain. Catalysis depends on Cys481, which acts as the Phosphocysteine intermediate.

In terms of assembly, forms a complex with SicP.

It localises to the secreted. The protein localises to the host cytoplasm. The enzyme catalyses O-phospho-L-tyrosyl-[protein] + H2O = L-tyrosyl-[protein] + phosphate. In terms of biological role, effector proteins function to alter host cell physiology and promote bacterial survival in host tissues. This protein includes tyrosine phosphatase and GTPase activating protein (GAP) activities. After bacterial internalization, GAP mediates the reversal of the cytoskeletal changes induced by SopE. This function is independent of its tyrosine phosphatase activity, which remains unclear. This Salmonella typhi protein is Secreted effector protein SptP (sptP).